An 806-amino-acid polypeptide reads, in one-letter code: MAYDHKTIEKKWQKFWKKNETFKADLNKDQKKYYALDMFPYPSGQGLHVGHPEGYTATDVMSRMKRMQGFNVLHPMGWDAFGLPAEQYALKTGHNPKDFTNKNIDHFRDQIQSLGFSYDWDREVNTTDPKFYKWTQWIFEQLYKKGLAYESEIMVNWAPDFMGGTVVANEEVEDGKTKRGGYPVYRKPMRQWVLKITAYADRLIDDLDLVDWPESVKEMQRNWIGRSEGASVFFPVVGDEDTKIEVFTTRADTLFGASYVVLAPEQELVDQLTTPEHKAEVEKYKEEASRRSDLERTDLNKDKTGVFTGSYVINPVNGEKLPIWISDYVLASYGTGAVMAVPSGDQRDYDFATKFNLPIKPIIEGADISEGAFDGDGKHINSGFLDGLNIADAKQKMIDWLEEHDAGHKKVNYRLRDWIFSRQRYWGEPIPVIHWDDGTTSLVPEDELPLELPKTDNIEPSGTGESPLANVEDWVNVYDENGRHGLRETNTMPQWAGSSWYWLRYTDPHNDEEFASKEALDYWSPVDLYVGGAEHAVLHLLYARFWHKVLYDLGLVPTKEPFMKLVNQGMILGSNHEKMSKSKGNVVNPDDIVDQYGADTLRLYEMFMGPLEESVPWDEKGLHGANKWVQRVWRLLMDDNNHLRDRVSTFNDGKLTKVYNQTVKKVTEDYERMHFNTAISQLMVFVNEAYKVDDLPVEYMKGFVKMIAPIMPHMAEELWSQFGESDTITYQPWPTYDPKALVEDEVEMIVQVNGKVRAKIKMAKDTDRDEAQQLALANEHVKKFTDGKDIKKVIVVPNKIVNIVAK.

Residues 40-51 carry the 'HIGH' region motif; that stretch reads PYPSGQGLHVGH. The 'KMSKS' region signature appears at 578–582; it reads KMSKS. An ATP-binding site is contributed by Lys581.

It belongs to the class-I aminoacyl-tRNA synthetase family.

It is found in the cytoplasm. The catalysed reaction is tRNA(Leu) + L-leucine + ATP = L-leucyl-tRNA(Leu) + AMP + diphosphate. In Limosilactobacillus reuteri (strain DSM 20016) (Lactobacillus reuteri), this protein is Leucine--tRNA ligase.